The chain runs to 444 residues: Phosphoglucosamine mutase (444 aa).

Catalysis depends on serine 101, which acts as the Phosphoserine intermediate. Mg(2+) is bound by residues serine 101, aspartate 240, aspartate 242, and aspartate 244. Serine 101 bears the Phosphoserine mark.

Belongs to the phosphohexose mutase family. Requires Mg(2+) as cofactor. In terms of processing, activated by phosphorylation.

It catalyses the reaction alpha-D-glucosamine 1-phosphate = D-glucosamine 6-phosphate. In terms of biological role, catalyzes the conversion of glucosamine-6-phosphate to glucosamine-1-phosphate. In Aeromonas salmonicida (strain A449), this protein is Phosphoglucosamine mutase.